The chain runs to 74 residues: Small ribosomal subunit protein bS18 (74 aa).

Belongs to the bacterial ribosomal protein bS18 family. As to quaternary structure, part of the 30S ribosomal subunit. Forms a tight heterodimer with protein bS6.

Functionally, binds as a heterodimer with protein bS6 to the central domain of the 16S rRNA, where it helps stabilize the platform of the 30S subunit. The protein is Small ribosomal subunit protein bS18 of Rhizorhabdus wittichii (strain DSM 6014 / CCUG 31198 / JCM 15750 / NBRC 105917 / EY 4224 / RW1) (Sphingomonas wittichii).